The sequence spans 358 residues: Magnesium-protoporphyrin IX monomethyl ester [oxidative] cyclase 3 (358 aa).

Belongs to the AcsF family. Fe cation is required as a cofactor.

It catalyses the reaction Mg-protoporphyrin IX 13-monomethyl ester + 3 NADPH + 3 O2 + 2 H(+) = 3,8-divinyl protochlorophyllide a + 3 NADP(+) + 5 H2O. The protein operates within porphyrin-containing compound metabolism; chlorophyll biosynthesis (light-independent). Functionally, catalyzes the formation of the isocyclic ring in chlorophyll biosynthesis. Mediates the cyclase reaction, which results in the formation of divinylprotochlorophyllide (Pchlide) characteristic of all chlorophylls from magnesium-protoporphyrin IX 13-monomethyl ester (MgPMME). The sequence is that of Magnesium-protoporphyrin IX monomethyl ester [oxidative] cyclase 3 from Nostoc sp. (strain PCC 7120 / SAG 25.82 / UTEX 2576).